We begin with the raw amino-acid sequence, 437 residues long: MSAIKVIGAGLAGAEAAWQIARQGIEVELYEMRPVQMTPAHHTGHFAELVCSNSLKGAGLDNAAGLLKEEMRRLDSLLMRVADQYAVPAGGALAVDREQFSQEITKLLQEHPLIQVHREEVKSLPQAGIAVIATGPLTAEGLAREIQKMTGEDALAFYDAAAPIVTLESINLEKAFWASRYDKGDPDYLNCPMTEEEYKRFYHELLKAETAEVKGFEKGKVFEGCMPVEVMAARGEQTLTFGPLKPVGLIDARTGQRSYAVVQLRKENRAGTLFNLVGFQTHLKWGEQQRVFRLIPGLENAEFVRFGVMHRNTFLNAPKVLKADYSLQKTPQLFFAGQITGVEGYVESTASGLVAGLNAVRRLKNLPTLIFPQETALGALARHLEGSPSVDFQPMSINYGLLPPLEVRIKAKKEKNAKISARALAKLEEFKAAEGLD.

8–13 (GAGLAG) provides a ligand contact to FAD.

This sequence belongs to the MnmG family. TrmFO subfamily. FAD is required as a cofactor.

The protein localises to the cytoplasm. The catalysed reaction is uridine(54) in tRNA + (6R)-5,10-methylene-5,6,7,8-tetrahydrofolate + NADH + H(+) = 5-methyluridine(54) in tRNA + (6S)-5,6,7,8-tetrahydrofolate + NAD(+). It catalyses the reaction uridine(54) in tRNA + (6R)-5,10-methylene-5,6,7,8-tetrahydrofolate + NADPH + H(+) = 5-methyluridine(54) in tRNA + (6S)-5,6,7,8-tetrahydrofolate + NADP(+). Catalyzes the folate-dependent formation of 5-methyl-uridine at position 54 (M-5-U54) in all tRNAs. This chain is Methylenetetrahydrofolate--tRNA-(uracil-5-)-methyltransferase TrmFO, found in Desulfitobacterium hafniense (strain Y51).